A 299-amino-acid chain; its full sequence is ATP phosphoribosyltransferase (299 aa).

This sequence belongs to the ATP phosphoribosyltransferase family. Long subfamily. Equilibrium between an active dimeric form, an inactive hexameric form and higher aggregates. Interconversion between the various forms is largely reversible and is influenced by the natural substrates and inhibitors of the enzyme. Mg(2+) is required as a cofactor.

It localises to the cytoplasm. It catalyses the reaction 1-(5-phospho-beta-D-ribosyl)-ATP + diphosphate = 5-phospho-alpha-D-ribose 1-diphosphate + ATP. Its pathway is amino-acid biosynthesis; L-histidine biosynthesis; L-histidine from 5-phospho-alpha-D-ribose 1-diphosphate: step 1/9. With respect to regulation, feedback inhibited by histidine. Functionally, catalyzes the condensation of ATP and 5-phosphoribose 1-diphosphate to form N'-(5'-phosphoribosyl)-ATP (PR-ATP). Has a crucial role in the pathway because the rate of histidine biosynthesis seems to be controlled primarily by regulation of HisG enzymatic activity. This Yersinia pseudotuberculosis serotype O:1b (strain IP 31758) protein is ATP phosphoribosyltransferase.